The chain runs to 307 residues: Aspartate carbamoyltransferase catalytic subunit (307 aa).

Carbamoyl phosphate contacts are provided by Arg54 and Thr55. Lys83 is an L-aspartate binding site. 3 residues coordinate carbamoyl phosphate: Arg104, His132, and Gln135. L-aspartate is bound by residues Arg165 and Arg228. Positions 267 and 268 each coordinate carbamoyl phosphate.

The protein belongs to the aspartate/ornithine carbamoyltransferase superfamily. ATCase family. In terms of assembly, heterododecamer (2C3:3R2) of six catalytic PyrB chains organized as two trimers (C3), and six regulatory PyrI chains organized as three dimers (R2).

It carries out the reaction carbamoyl phosphate + L-aspartate = N-carbamoyl-L-aspartate + phosphate + H(+). The protein operates within pyrimidine metabolism; UMP biosynthesis via de novo pathway; (S)-dihydroorotate from bicarbonate: step 2/3. Functionally, catalyzes the condensation of carbamoyl phosphate and aspartate to form carbamoyl aspartate and inorganic phosphate, the committed step in the de novo pyrimidine nucleotide biosynthesis pathway. The polypeptide is Aspartate carbamoyltransferase catalytic subunit (Clostridium perfringens (strain 13 / Type A)).